Here is a 720-residue protein sequence, read N- to C-terminus: Nucleoporin 88 (720 aa).

Positions 584–611 form a coiled coil; sequence LALCREDRKSLTEAAERLADKYEDAKYR.

As to expression, widely expressed. Higher levels of expression are detected in highly proliferative frontal regions of the embryo, e.g. brain, eye and anterior trunk.

The protein localises to the nucleus. The protein resides in the nuclear pore complex. Functionally, component of the nuclear pore complex. The protein is Nucleoporin 88 of Danio rerio (Zebrafish).